A 588-amino-acid chain; its full sequence is DNA ligase (588 aa).

Glutamate 250 contacts ATP. Lysine 252 (N6-AMP-lysine intermediate) is an active-site residue. Positions 257, 272, 302, 342, 417, and 423 each coordinate ATP.

Belongs to the ATP-dependent DNA ligase family. Requires Mg(2+) as cofactor.

It catalyses the reaction ATP + (deoxyribonucleotide)n-3'-hydroxyl + 5'-phospho-(deoxyribonucleotide)m = (deoxyribonucleotide)n+m + AMP + diphosphate.. DNA ligase that seals nicks in double-stranded DNA during DNA replication, DNA recombination and DNA repair. The polypeptide is DNA ligase (Nitrosopumilus maritimus (strain SCM1)).